We begin with the raw amino-acid sequence, 75 residues long: Putative antitoxin VapB29 (75 aa).

Functionally, possibly the antitoxic component of a type II toxin-antitoxin (TA) system. Its cognate toxin is VapC29 (Potential). The protein is Putative antitoxin VapB29 (vapB29) of Mycobacterium tuberculosis (strain CDC 1551 / Oshkosh).